The following is a 1260-amino-acid chain: Kinesin-like protein KIN-14E (1260 aa).

The region spanning 115–274 (FQKDPIPTSL…PGREEIEALL (160 aa)) is the MyTH4 domain. Residues 279 to 593 (LTTIVFFLDE…HINDVMLRRY (315 aa)) form the FERM domain. 2 coiled-coil regions span residues 615-676 (QNFE…LLEV) and 753-853 (SKRL…TAAI). One can recognise a Kinesin motor domain in the interval 888 to 1209 (KIRVYCRIRP…LLYASRVRTI (322 aa)). 972 to 977 (GSGKTF) is an ATP binding site. Residues 1217–1239 (ISSKEMVRLKKLVAYWKEQAGKK) are calmodulin-binding. Residues 1221-1260 (EMVRLKKLVAYWKEQAGKKGEEEDLVDIEEDRTRKDEADS) form a homodimerization domain region. Residues 1236–1260 (AGKKGEEEDLVDIEEDRTRKDEADS) are disordered. A compositionally biased stretch (basic and acidic residues) spans 1251–1260 (DRTRKDEADS).

It belongs to the TRAFAC class myosin-kinesin ATPase superfamily. Kinesin family. KIN-14 subfamily. In terms of assembly, homodimer (via C-terminus). Binds microtubules via its N-terminus containing the MyTH4 domain and binds F-actin via its FERM domain. Interacts with KIPK1. Interacts with KIPK2. Interacts with AN. Interacts with AIR9. Interacts (via C-terminus) with KIC, CAM2, CAM4 and CAM6. KIC and calmodulin show competitive binding to KCBP. Binding to calmodulin inhibits microtubule binding activity. Binding to KIC inhibits microtubule binding activity and microtubule-stimulated ATPase activity. Widely expressed with the highest levels in flowers. Strongly expressed in the root tip. Highly detected in the branch apex of the trichome.

It is found in the cytoplasm. The protein resides in the cell cortex. The protein localises to the cytoskeleton. It localises to the spindle. Its subcellular location is the phragmoplast. Its function is as follows. Minus-end microtubule-dependent motor protein involved in the regulation of cell division and trichome morphogenesis through microtubules bundling. Possesses basal and microtubule-stimulated ATPase activities. Acts as a hub that brings together microtubules and actin filaments to modulate the cytoskeleton during trichome formation and morphogenesis. Could be involved in the negative regulation of root growth. The polypeptide is Kinesin-like protein KIN-14E (Arabidopsis thaliana (Mouse-ear cress)).